Consider the following 367-residue polypeptide: Forkhead box protein I1-B (367 aa).

2 disordered regions span residues 1-21 (MNPV…HLPH) and 213-274 (DNGN…PPTV). Positions 128-222 (RPPYSYSALI…DNGNFRRKRK (95 aa)) form a DNA-binding region, fork-head. Residues 233-246 (AKRDEDHLNPKGKE) are compositionally biased toward basic and acidic residues. A compositionally biased stretch (polar residues) spans 252 to 274 (TPSSSPEVLSPTGHSKSPSPPTV).

In terms of tissue distribution, initially localized to the animal hemisphere (the presumptive ectoderm) of early-mid blastula embryos. Becomes restricted to head placodes, excluding the otic placodes, by the tailbud stages.

It is found in the nucleus. Functionally, transcription factor. Essential for ventral specification of the early cephalic (head) ectoderm during gastrulation, playing a role in the 'non-neural' versus 'neural' cell fate choice. Binds to DNA via the target sequence 5'-[AG]TAAA[CT]A-3', with 5'-ATAAACA-3' being the preferred binding site. In Xenopus laevis (African clawed frog), this protein is Forkhead box protein I1-B (foxi1-b).